The chain runs to 90 residues: Putative membrane protein insertion efficiency factor (90 aa).

The tract at residues 68 to 90 (VPAHFSLRRNPQYKEEDHRGKKR) is disordered. The span at 79 to 90 (QYKEEDHRGKKR) shows a compositional bias: basic and acidic residues.

This sequence belongs to the UPF0161 family.

The protein resides in the cell membrane. Its function is as follows. Could be involved in insertion of integral membrane proteins into the membrane. This Lactiplantibacillus plantarum (strain ATCC BAA-793 / NCIMB 8826 / WCFS1) (Lactobacillus plantarum) protein is Putative membrane protein insertion efficiency factor.